Reading from the N-terminus, the 253-residue chain is Uridylate kinase (253 aa).

9-12 (KLSG) provides a ligand contact to ATP. Gly51 lines the UMP pocket. ATP is bound by residues Gly52 and Arg56. UMP contacts are provided by residues Asp72 and 133-140 (SGNPFFTT). 3 residues coordinate ATP: Thr160, Tyr166, and Asp169.

The protein belongs to the UMP kinase family. In terms of assembly, homohexamer.

It is found in the cytoplasm. The enzyme catalyses UMP + ATP = UDP + ADP. Its pathway is pyrimidine metabolism; CTP biosynthesis via de novo pathway; UDP from UMP (UMPK route): step 1/1. Its activity is regulated as follows. Inhibited by UTP. Functionally, catalyzes the reversible phosphorylation of UMP to UDP. The polypeptide is Uridylate kinase (Synechococcus sp. (strain JA-2-3B'a(2-13)) (Cyanobacteria bacterium Yellowstone B-Prime)).